The primary structure comprises 736 residues: Na(+)/H(+) antiporter NhaA (736 aa).

The segment at 1–387 (MNHSPQSARP…ICGYLLLRAA (387 aa)) is na(+)/H(+) antiporter NhaA. 12 helical membrane passes run 23–43 (AGGITLMAAAALALIVANSPF), 58–78 (LSLAHWINDALMAIFFLLVGL), 96–116 (MLPGIAAAGGVILPAIIFAVL), 126–146 (GWAVPSATDIAFALGVLSLLG), 155–175 (VFLATLAILDDLAAVVIIAIF), 178–198 (AEISMPYLGAAFITAAVLFVM), 201–221 (MGVVKLLPYLISAVILWFFVF), 224–244 (GVHATVAGVVAALMIPLKPAP), 265–285 (VAFIVVPIFGFANAGISFKGL), 298–318 (ILLGLFLGKQFGVFGAAWLAI), 334–354 (LYGVAILCGIGFTMSIFIGLL), and 367–387 (IGVLSGSALSAICGYLLLRAA). Residues 388 to 736 (RPDQSAANPL…EKAIWARYGL (349 aa)) are peptidase S49.

It in the N-terminal section; belongs to the NhaA Na(+)/H(+) (TC 2.A.33) antiporter family. In the C-terminal section; belongs to the peptidase S49 family.

The protein localises to the cell inner membrane. It carries out the reaction Na(+)(in) + 2 H(+)(out) = Na(+)(out) + 2 H(+)(in). Functionally, na(+)/H(+) antiporter that extrudes sodium in exchange for external protons. The chain is Na(+)/H(+) antiporter NhaA from Brucella abortus (strain 2308).